The primary structure comprises 128 residues: Putative histidinol dehydrogenase (128 aa).

The interval Q21–R84 is disordered. Basic and acidic residues-rich tracts occupy residues H34 to A50 and Q72 to S81.

It belongs to the histidinol dehydrogenase family.

The enzyme catalyses L-histidinol + 2 NAD(+) + H2O = L-histidine + 2 NADH + 3 H(+). It functions in the pathway amino-acid biosynthesis; L-histidine biosynthesis; L-histidine from 5-phospho-alpha-D-ribose 1-diphosphate: step 9/9. In terms of biological role, catalyzes the sequential NAD-dependent oxidations of L-histidinol to L-histidinaldehyde and then to L-histidine. This chain is Putative histidinol dehydrogenase (hisD), found in Azospirillum brasilense.